We begin with the raw amino-acid sequence, 288 residues long: ATP synthase gamma chain (288 aa).

Belongs to the ATPase gamma chain family. F-type ATPases have 2 components, CF(1) - the catalytic core - and CF(0) - the membrane proton channel. CF(1) has five subunits: alpha(3), beta(3), gamma(1), delta(1), epsilon(1). CF(0) has three main subunits: a, b and c.

It localises to the cell inner membrane. Functionally, produces ATP from ADP in the presence of a proton gradient across the membrane. The gamma chain is believed to be important in regulating ATPase activity and the flow of protons through the CF(0) complex. This Blochmanniella floridana protein is ATP synthase gamma chain.